Reading from the N-terminus, the 355-residue chain is Peptide chain release factor 1 (355 aa).

Position 233 is an N5-methylglutamine (Q233). The span at 283–293 (EKNKDRADARK) shows a compositional bias: basic and acidic residues. A disordered region spans residues 283–304 (EKNKDRADARKSQVGTGDRSER).

This sequence belongs to the prokaryotic/mitochondrial release factor family. In terms of processing, methylated by PrmC. Methylation increases the termination efficiency of RF1.

It localises to the cytoplasm. Its function is as follows. Peptide chain release factor 1 directs the termination of translation in response to the peptide chain termination codons UAG and UAA. In Finegoldia magna (strain ATCC 29328 / DSM 20472 / WAL 2508) (Peptostreptococcus magnus), this protein is Peptide chain release factor 1.